The chain runs to 372 residues: Alanine dehydrogenase 1 (372 aa).

The active site involves His94. NAD(+) is bound at residue 170 to 200; sequence TYVIFGGGVAATNAANVALGLNAKVIIIELN.

The protein belongs to the AlaDH/PNT family.

It catalyses the reaction L-alanine + NAD(+) + H2O = pyruvate + NH4(+) + NADH + H(+). It functions in the pathway amino-acid degradation; L-alanine degradation via dehydrogenase pathway; NH(3) and pyruvate from L-alanine: step 1/1. May play a role in cell wall synthesis as L-alanine is an important constituent of the peptidoglycan layer. This chain is Alanine dehydrogenase 1 (ald1), found in Staphylococcus aureus (strain USA300).